Reading from the N-terminus, the 62-residue chain is Large ribosomal subunit protein bL28 (62 aa).

Belongs to the bacterial ribosomal protein bL28 family.

This chain is Large ribosomal subunit protein bL28, found in Caldicellulosiruptor bescii (strain ATCC BAA-1888 / DSM 6725 / KCTC 15123 / Z-1320) (Anaerocellum thermophilum).